The primary structure comprises 62 residues: Large ribosomal subunit protein eL24 (62 aa).

Zn(2+) is bound by residues Cys6, Cys9, Cys32, and Cys36. A C4-type zinc finger spans residues 6–36 (CSFCGELLEPGTGLLFAKRDGSTYYFCSSKC).

Belongs to the eukaryotic ribosomal protein eL24 family. In terms of assembly, part of the 50S ribosomal subunit. Forms a cluster with proteins L3 and L14. It depends on Zn(2+) as a cofactor.

Its function is as follows. Binds to the 23S rRNA. The chain is Large ribosomal subunit protein eL24 from Methanococcoides burtonii (strain DSM 6242 / NBRC 107633 / OCM 468 / ACE-M).